A 941-amino-acid polypeptide reads, in one-letter code: Bifunctional uridylyltransferase/uridylyl-removing enzyme (941 aa).

Residues 1 to 372 (MAKHDLSDAT…RFAHRPRRIP (372 aa)) form a uridylyltransferase region. Positions 373–728 (GTPEFIEDRG…VRTHSFHAIT (356 aa)) are uridylyl-removing. Residues 489-611 (VDEHLIRSVG…VQSLDRLRML (123 aa)) form the HD domain. ACT domains follow at residues 729-810 (EITV…EVIA) and 840-919 (VIEI…LREQ). The disordered stretch occupies residues 916 to 941 (LREQMPSGIIAPAATKSPAAEKKARV).

It belongs to the GlnD family. Mg(2+) is required as a cofactor.

The catalysed reaction is [protein-PII]-L-tyrosine + UTP = [protein-PII]-uridylyl-L-tyrosine + diphosphate. It carries out the reaction [protein-PII]-uridylyl-L-tyrosine + H2O = [protein-PII]-L-tyrosine + UMP + H(+). Uridylyltransferase (UTase) activity is inhibited by glutamine, while glutamine activates uridylyl-removing (UR) activity. Its function is as follows. Modifies, by uridylylation and deuridylylation, the PII regulatory proteins (GlnB and homologs), in response to the nitrogen status of the cell that GlnD senses through the glutamine level. Under low glutamine levels, catalyzes the conversion of the PII proteins and UTP to PII-UMP and PPi, while under higher glutamine levels, GlnD hydrolyzes PII-UMP to PII and UMP (deuridylylation). Thus, controls uridylylation state and activity of the PII proteins, and plays an important role in the regulation of nitrogen assimilation and metabolism. The sequence is that of Bifunctional uridylyltransferase/uridylyl-removing enzyme from Allorhizobium ampelinum (strain ATCC BAA-846 / DSM 112012 / S4) (Agrobacterium vitis (strain S4)).